Reading from the N-terminus, the 286-residue chain is uncharacterized protein (286 aa).

The protein belongs to the methyltransferase superfamily.

In terms of biological role, involved in osmoadaptation. This is an uncharacterized protein from Emericella nidulans (strain FGSC A4 / ATCC 38163 / CBS 112.46 / NRRL 194 / M139) (Aspergillus nidulans).